We begin with the raw amino-acid sequence, 238 residues long: MKTRPKTRIKTRVKICGIRSPKDIEFAALYGADAVGFITEVPVESPRKLDSDTAAALISKVPKCLDSVMVIMPETSTSALELIEKVKPNIVQIHSDLPLSELKAVREKADIPIIKTLSVPAEQEAPKLHNIVTRLLEEVRELEESGIVDSVLLDSGIAGKTGGTGCVHDWDLSRRIAEETELPLILAGGLKPENVQEAIRSVSPYAVDTASGVETQGKKDSVKVRKFIEEVRCTYAFL.

Belongs to the TrpF family.

The catalysed reaction is N-(5-phospho-beta-D-ribosyl)anthranilate = 1-(2-carboxyphenylamino)-1-deoxy-D-ribulose 5-phosphate. It participates in amino-acid biosynthesis; L-tryptophan biosynthesis; L-tryptophan from chorismate: step 3/5. This Methanosarcina acetivorans (strain ATCC 35395 / DSM 2834 / JCM 12185 / C2A) protein is N-(5'-phosphoribosyl)anthranilate isomerase.